The chain runs to 355 residues: SH3 domain-containing protein Dlish (355 aa).

3 consecutive SH3 domains span residues 57–117 (SPDS…PCNT), 183–243 (EPSG…PADS), and 287–352 (YHGT…PPAM).

As to quaternary structure, interacts with dachs (via C-terminus); the interaction is direct. Interacts (via N-terminus including SH3 domain 1) with palmitoyltransferase app; this leads to palmitoylation of Dlish by app. Also interacts with dco, ft, ft-regulated E3 ubiquitin ligase Fbxl7, F-box protein slmb and SCF E3 ubiquitin-protein ligase complex component Cul1. Palmitoylated by app.

The protein resides in the cytoplasm. Its subcellular location is the cell cortex. Required for the apical cell cortex localization, total cellular level and full activity of dachs. This chain is SH3 domain-containing protein Dlish, found in Drosophila melanogaster (Fruit fly).